The primary structure comprises 567 residues: CTD small phosphatase-like protein 2 (567 aa).

Disordered stretches follow at residues 31-53, 100-150, and 280-361; these read QQQQ…HQCE, ASST…FSSV, and NKEN…EEFN. Composition is skewed to low complexity over residues 100-118, 130-150, and 286-297; these read ASST…SPLK, SMND…FSSV, and ESNNSNSNSNSS. Over residues 298 to 308 the composition is skewed to polar residues; the sequence is PSFFHNLQQHP. The segment covering 309–332 has biased composition (low complexity); it reads TSAATTTTTTTTTITTTSATTSII. Residues 337-360 are compositionally biased toward acidic residues; sequence NSDDEIDDECDDESEEEEEDEEEF. One can recognise an FCP1 homology domain in the interval 386-544; the sequence is HSSPKISLVL…LQLVPFLESL (159 aa).

The protein belongs to the CTDSPL2 family.

In terms of biological role, probable phosphatase. The polypeptide is CTD small phosphatase-like protein 2 (ctdspl2) (Dictyostelium discoideum (Social amoeba)).